The following is a 310-amino-acid chain: Glutaminase (310 aa).

7 residues coordinate substrate: Ser-67, Asn-118, Glu-161, Asn-168, Tyr-192, Tyr-244, and Val-262.

Belongs to the glutaminase family. As to quaternary structure, homotetramer.

It carries out the reaction L-glutamine + H2O = L-glutamate + NH4(+). This Legionella pneumophila (strain Corby) protein is Glutaminase.